Here is a 388-residue protein sequence, read N- to C-terminus: MNLHEYQAKQLFARYGLPAPVGYACTTPREAEEAASKIGAGPWGVKCQVHAGGRGKAGGVKVVNSKEDIRAFAENWLGKRLVTYQTDANGQPVNQILVEAATDIAKELYLGAVVDRSSRRVVFMASTEGGVEIEKVAEETPHLIHKVALDPLTGPMPYQGRELAFKLGLEGKLVQQFTKIFMGLATIFLERDLALIEINPLVITKQGDLICLDGKLGADGNALFRQPDLREMRDQSQEDPREAQAAQWELNYVALDGNIGCMVNGAGLAMGTMDIVKLHGGEPANFLDVGGGATKERVTEAFKIILSDDKVKAVLVNIFGGIVRCDLIADGIIGAVAEVGVNVPVVVRLEGNNAELGAKKLADSGLNIIAAKGLTDAAQQVVAAVEGK.

The ATP-grasp domain maps to 9 to 244 (KQLFARYGLP…QSQEDPREAQ (236 aa)). ATP-binding positions include Lys-46, 53–55 (GRG), Glu-99, Thr-102, and Glu-107. Mg(2+) is bound by residues Asn-199 and Asp-213. Substrate is bound by residues Asn-264 and 321-323 (GIV).

Belongs to the succinate/malate CoA ligase beta subunit family. In terms of assembly, heterotetramer of two alpha and two beta subunits. The cofactor is Mg(2+).

It catalyses the reaction succinate + ATP + CoA = succinyl-CoA + ADP + phosphate. It carries out the reaction GTP + succinate + CoA = succinyl-CoA + GDP + phosphate. The protein operates within carbohydrate metabolism; tricarboxylic acid cycle; succinate from succinyl-CoA (ligase route): step 1/1. In terms of biological role, succinyl-CoA synthetase functions in the citric acid cycle (TCA), coupling the hydrolysis of succinyl-CoA to the synthesis of either ATP or GTP and thus represents the only step of substrate-level phosphorylation in the TCA. The beta subunit provides nucleotide specificity of the enzyme and binds the substrate succinate, while the binding sites for coenzyme A and phosphate are found in the alpha subunit. The protein is Succinate--CoA ligase [ADP-forming] subunit beta of Shigella dysenteriae serotype 1 (strain Sd197).